Here is a 328-residue protein sequence, read N- to C-terminus: Protoheme IX farnesyltransferase (328 aa).

Transmembrane regions (helical) follow at residues 31 to 51 (IILL…KGEV), 53 to 73 (LFLL…ANAI), 120 to 140 (VFAN…YVGV), 153 to 173 (IVIG…AVTG), 181 to 201 (LLFA…AIYI), 226 to 246 (IWVY…PLHV), 250 to 270 (IYAV…WQLL), and 285 to 305 (YSIY…LPFT).

The protein belongs to the UbiA prenyltransferase family. Protoheme IX farnesyltransferase subfamily.

It localises to the cell inner membrane. The enzyme catalyses heme b + (2E,6E)-farnesyl diphosphate + H2O = Fe(II)-heme o + diphosphate. It functions in the pathway porphyrin-containing compound metabolism; heme O biosynthesis; heme O from protoheme: step 1/1. Converts heme B (protoheme IX) to heme O by substitution of the vinyl group on carbon 2 of heme B porphyrin ring with a hydroxyethyl farnesyl side group. This chain is Protoheme IX farnesyltransferase, found in Trichodesmium erythraeum (strain IMS101).